Reading from the N-terminus, the 418-residue chain is MGVSKKKSGEIRGDLIPGLPEELAIECLVRVPFQFHSSIKSVCRSWKCVISSRSFIKERIGFGKAESLLCLVQPLTSPPSPAMMEGGEMSQKKKEEEEGESQMTQQLLQPRITGTPLYGLSVYNATLDTWHRVAIPERIPLFCECVAIQDAGKVLLIGGWDPETLQPVRDVFVLDFFAGEGSGRRFRRGRPMSAARSFFACASVGSTKVYVAGGHDDQKNALRSAEVYDVEKDEWSMLPPMTEGRDECHGFSMATDPGFCVLSGYGTETQGQFRSDGEIYDPITNSWSTIENVWPFPDLSPRGRTAAAAAEFPGDFRGCRLWCFIDSERQSQPHWEVEDDSMKWKVIMDTIRLPVTTMTSVFAGSLSGQAVAMIGGGGEESGTMMVKTTAEKNGGKWSHVNTPSGFSSLPFSCSSIYV.

The F-box domain maps to 14–61 (DLIPGLPEELAIECLVRVPFQFHSSIKSVCRSWKCVISSRSFIKERIG). Positions 79 to 104 (PSPAMMEGGEMSQKKKEEEEGESQMT) are disordered. Kelch repeat units lie at residues 104-150 (TQQL…AIQD), 153-206 (KVLL…SVGS), 208-255 (KVYV…SMAT), and 258-314 (GFCV…EFPG).

Part of a SCF (ASK-cullin-F-box) protein ligase complex. Interacts with SKP1A/ASK1 and SPK1B/ASK2.

It localises to the nucleus. The protein operates within protein modification; protein ubiquitination. Component of SCF(ASK-cullin-F-box) E3 ubiquitin ligase complexes, which may mediate the ubiquitination and subsequent proteasomal degradation of target proteins. The chain is F-box/kelch-repeat protein SKIP20 (SKIP20) from Arabidopsis thaliana (Mouse-ear cress).